An 84-amino-acid polypeptide reads, in one-letter code: GTP cyclohydrolase 1 feedback regulatory protein (84 aa).

The protein belongs to the GFRP family. Homopentamer. Forms a complex with GCH1 where a GCH1 homodecamer is sandwiched by two GFRP homopentamers.

It is found in the nucleus. The protein resides in the nucleus membrane. It localises to the cytoplasm. The protein localises to the cytosol. Mediates tetrahydrobiopterin inhibition of GTP cyclohydrolase 1. This is GTP cyclohydrolase 1 feedback regulatory protein (gchfr) from Xenopus tropicalis (Western clawed frog).